A 145-amino-acid chain; its full sequence is Large ribosomal subunit protein uL11 (145 aa).

This sequence belongs to the universal ribosomal protein uL11 family. In terms of assembly, part of the ribosomal stalk of the 50S ribosomal subunit. Interacts with L10 and the large rRNA to form the base of the stalk. L10 forms an elongated spine to which L12 dimers bind in a sequential fashion forming a multimeric L10(L12)X complex. One or more lysine residues are methylated.

Forms part of the ribosomal stalk which helps the ribosome interact with GTP-bound translation factors. The chain is Large ribosomal subunit protein uL11 from Aquifex aeolicus (strain VF5).